The chain runs to 545 residues: Glucose-6-phosphate isomerase (545 aa).

Residue Glu351 is the Proton donor of the active site. Active-site residues include His382 and Lys510.

It belongs to the GPI family.

The protein localises to the cytoplasm. The catalysed reaction is alpha-D-glucose 6-phosphate = beta-D-fructose 6-phosphate. Its pathway is carbohydrate biosynthesis; gluconeogenesis. It functions in the pathway carbohydrate degradation; glycolysis; D-glyceraldehyde 3-phosphate and glycerone phosphate from D-glucose: step 2/4. Functionally, catalyzes the reversible isomerization of glucose-6-phosphate to fructose-6-phosphate. This Shewanella oneidensis (strain ATCC 700550 / JCM 31522 / CIP 106686 / LMG 19005 / NCIMB 14063 / MR-1) protein is Glucose-6-phosphate isomerase.